Consider the following 143-residue polypeptide: MDVLKKGFSFAKEGVVAAAEKTKQGVQDAAEKTKQGVQDAAEKTKEGVMYVGTKTKEGVVQSVNTVTEKTKEQANVVGGAVVAGVNTVASKTVEGVENVAAASGVVKLDEHGREIPAEQVAEGKQTTQEPLVEATEATEETGK.

3 consecutive repeat copies span residues 20–30 (EKTKQGVQDAA), 31–41 (EKTKQGVQDAA), and 42–52 (EKTKEGVMYVG). Residues 20-78 (EKTKQGVQDAAEKTKQGVQDAAEKTKEGVMYVGTKTKEGVVQSVNTVTEKTKEQANVVG) are 5 X 11 AA tandem repeats of [EGST]-K-T-K-[EQ]-[GQ]-[VA]-X(4). Residues 53–67 (TKTKEGVVQSVNTVT) form a 4; approximate repeat. Repeat 5 spans residues 68 to 78 (EKTKEQANVVG). The segment at 113–143 (REIPAEQVAEGKQTTQEPLVEATEATEETGK) is disordered.

This sequence belongs to the synuclein family. In terms of tissue distribution, nervous system tissue. Found in the electric lobe, the brain and the spinal cord.

The protein localises to the nucleus. Functionally, may have a role in synaptic regulation or signal transduction. This Tetronarce californica (Pacific electric ray) protein is Synuclein.